A 341-amino-acid polypeptide reads, in one-letter code: UPF0283 membrane protein VV2076 (341 aa).

4 helical membrane-spanning segments follow: residues 64–84 (LAGG…VDSV), 93–113 (WLTL…LGAM), 207–227 (ESAA…LVAW), and 255–275 (LVLA…AGMD).

The protein belongs to the UPF0283 family.

Its subcellular location is the cell inner membrane. This is UPF0283 membrane protein VV2076 from Vibrio vulnificus (strain YJ016).